Reading from the N-terminus, the 511-residue chain is Peroxisomal N(1)-acetyl-spermine/spermidine oxidase (511 aa).

M1 is modified (N-acetylmethionine). FAD is bound by residues A24, E45, R53, and 69-70 (HW). Residues H72 and V194 each contribute to the substrate site. V247 lines the FAD pocket. Substrate is bound at residue N320. Residues E472 and 481-482 (TT) each bind FAD. The Microbody targeting signal motif lies at 509-511 (PRL).

It belongs to the flavin monoamine oxidase family. In terms of assembly, monomer. The cofactor is FAD. As to expression, widely expressed. Not detected in spleen. Expressed at lower level in neoplastic tissues.

Its subcellular location is the peroxisome. The protein resides in the cytoplasm. It carries out the reaction N(1)-acetylspermine + O2 + H2O = 3-acetamidopropanal + spermidine + H2O2. It catalyses the reaction N(1)-acetylspermidine + O2 + H2O = 3-acetamidopropanal + putrescine + H2O2. The enzyme catalyses N(1),N(12)-diacetylspermine + O2 + H2O = 3-acetamidopropanal + N(1)-acetylspermidine + H2O2. It functions in the pathway amine and polyamine metabolism; spermine metabolism. Functionally, flavoenzyme which catalyzes the oxidation of N(1)-acetylspermine to spermidine and is thus involved in the polyamine back-conversion. Can also oxidize N(1)-acetylspermidine to putrescine. Substrate specificity: N(1)-acetylspermine = N(1)-acetylspermidine &gt; N(1),N(12)-diacylspermine &gt;&gt; spermine. Does not oxidize spermidine. Plays an important role in the regulation of polyamine intracellular concentration and has the potential to act as a determinant of cellular sensitivity to the antitumor polyamine analogs. The protein is Peroxisomal N(1)-acetyl-spermine/spermidine oxidase (PAOX) of Homo sapiens (Human).